Consider the following 2287-residue polypeptide: Protein Ycf2 (2287 aa).

Glycine 1641–serine 1648 serves as a coordination point for ATP.

The protein belongs to the Ycf2 family.

It is found in the plastid. The protein resides in the chloroplast stroma. Its function is as follows. Probable ATPase of unknown function. Its presence in a non-photosynthetic plant (Epifagus virginiana) and experiments in tobacco indicate that it has an essential function which is probably not related to photosynthesis. This Lepidium virginicum (Virginia pepperweed) protein is Protein Ycf2.